The sequence spans 163 residues: Large ribosomal subunit protein uL10 (163 aa).

It belongs to the universal ribosomal protein uL10 family. In terms of assembly, part of the ribosomal stalk of the 50S ribosomal subunit. The N-terminus interacts with L11 and the large rRNA to form the base of the stalk. The C-terminus forms an elongated spine to which L12 dimers bind in a sequential fashion forming a multimeric L10(L12)X complex.

In terms of biological role, forms part of the ribosomal stalk, playing a central role in the interaction of the ribosome with GTP-bound translation factors. The protein is Large ribosomal subunit protein uL10 of Haemophilus influenzae (strain PittGG).